A 253-amino-acid polypeptide reads, in one-letter code: LexA repressor (253 aa).

A disordered region spans residues 1-34; sequence MAIEKKPAGARGSRGSRTVKTLPNGKPDPASLSD. The segment at residues 56 to 76 is a DNA-binding region (H-T-H motif); sequence IREIGDAAGLQSTSSVAYQLK. Residues 82-106 are compositionally biased toward basic and acidic residues; it reads GFLRRDPNKPRAVDVRHLPETESRS. The segment at 82–127 is disordered; the sequence is GFLRRDPNKPRAVDVRHLPETESRSSKAATQAKSKAPQAGAHDPEL. The span at 107-120 shows a compositional bias: low complexity; that stretch reads SKAATQAKSKAPQA. Active-site for autocatalytic cleavage activity residues include Ser177 and Lys214.

It belongs to the peptidase S24 family. In terms of assembly, homodimer.

The enzyme catalyses Hydrolysis of Ala-|-Gly bond in repressor LexA.. Functionally, represses a number of genes involved in the response to DNA damage (SOS response), including recA and lexA. In the presence of single-stranded DNA, RecA interacts with LexA causing an autocatalytic cleavage which disrupts the DNA-binding part of LexA, leading to derepression of the SOS regulon and eventually DNA repair. The sequence is that of LexA repressor from Corynebacterium glutamicum (strain R).